The chain runs to 60 residues: Large ribosomal subunit protein uL30 (60 aa).

Belongs to the universal ribosomal protein uL30 family. Part of the 50S ribosomal subunit.

This chain is Large ribosomal subunit protein uL30, found in Streptomyces coelicolor (strain ATCC BAA-471 / A3(2) / M145).